A 145-amino-acid polypeptide reads, in one-letter code: Large ribosomal subunit protein cL37 (145 aa).

The N-terminal 63 residues, M1–S63, are a transit peptide targeting the chloroplast. The disordered stretch occupies residues K125–V145.

This sequence belongs to the chloroplast-specific ribosomal protein cL37 family. As to quaternary structure, part of the 50S ribosomal subunit.

The protein resides in the plastid. It is found in the chloroplast. This is Large ribosomal subunit protein cL37 (PSRP5) from Pisum sativum (Garden pea).